The primary structure comprises 267 residues: Kallikrein-14 (267 aa).

A signal peptide spans 1–34 (MSLRVLGSGTWPSAPKMFLLLTALQVLAIAMTQS). A propeptide spans 35–40 (QEDENK) (activation peptide). The region spanning 41–265 (IIGGHTCTRS…YRSWIEETMR (225 aa)) is the Peptidase S1 domain. 5 cysteine pairs are disulfide-bonded: C47–C180, C68–C84, C159–C226, C191–C205, and C216–C241. Residues H83 and D127 each act as charge relay system in the active site. The active-site Charge relay system is the S220.

The protein belongs to the peptidase S1 family. Kallikrein subfamily. In terms of processing, proteolytic cleavage of the activation peptide produces the active enzyme. Highly expressed in CNS, bone marrow and fetal liver. Also expressed in breast, thyroid, kidney, colon, pancreas, spleen, prostate, uterus, small intestine, placenta and skeletal muscle. Among 40 tissues tested, the highest expression is detected in skin followed by breast and prostate (at protein level). Expressed in stratum corneum by sweat ducts and sweat glands and detected in sweat (at protein level).

Its subcellular location is the secreted. The protein localises to the extracellular space. With respect to regulation, inhibited by SERPINA1, SERPINC1, SERPINE1, SERPINF2, aprotinin, soybean, trypsin inhibitor and leupeptin. Inhibited by serine protease inhibitor SPINK5. Has an autoproteolytic activity which may have a regulatory effect. Activated by citrate and inhibited by zinc and to a lower extent by manganese. In terms of biological role, serine-type endopeptidase with a dual trypsin-like and chymotrypsin-like substrate specificity. May activate/inactivate the proteinase-activated receptors F2R, F2RL1 and F2RL3 and other kallikreins including KLK1, KLK3, KLK5 and KLK11. May function in seminal clot liquefaction through direct cleavage of the semenogelin SEMG1 and SEMG2 and activation of KLK3. May function through desmoglein DSG1 cleavage in epidermal desquamation a process by which the most superficial corneocytes are shed from the skin surface. May be involved in several aspects of tumor progression including growth, invasion and angiogenesis. The chain is Kallikrein-14 (KLK14) from Homo sapiens (Human).